A 206-amino-acid chain; its full sequence is Small ribosomal subunit protein uS4 (206 aa).

An S4 RNA-binding domain is found at 96-156 (GRLDNVVYRM…EKAKKQARIK (61 aa)).

This sequence belongs to the universal ribosomal protein uS4 family. Part of the 30S ribosomal subunit. Contacts protein S5. The interaction surface between S4 and S5 is involved in control of translational fidelity.

Functionally, one of the primary rRNA binding proteins, it binds directly to 16S rRNA where it nucleates assembly of the body of the 30S subunit. In terms of biological role, with S5 and S12 plays an important role in translational accuracy. The protein is Small ribosomal subunit protein uS4 of Tolumonas auensis (strain DSM 9187 / NBRC 110442 / TA 4).